Reading from the N-terminus, the 451-residue chain is Bifunctional protein GlmU (451 aa).

Residues 1–225 are pyrophosphorylase; it reads MSLAVVILAA…EFEIQGVNDR (225 aa). Residues 8–11, Lys-22, Gln-73, 78–79, 99–101, Gly-135, Glu-150, Asn-165, and Asn-223 contribute to the UDP-N-acetyl-alpha-D-glucosamine site; these read LAAG, GT, and YGD. A Mg(2+)-binding site is contributed by Asp-101. A Mg(2+)-binding site is contributed by Asn-223. The linker stretch occupies residues 226 to 246; the sequence is IQLAQLEREWQKHIAEVIMSK. Positions 247–451 are N-acetyltransferase; that stretch reads GVSVADPSRI…IDTWQRPVKK (205 aa). UDP-N-acetyl-alpha-D-glucosamine-binding residues include Arg-329 and Lys-347. His-359 serves as the catalytic Proton acceptor. 2 residues coordinate UDP-N-acetyl-alpha-D-glucosamine: Tyr-362 and Asn-373. Residues Ala-376, 382-383, Ser-401, Ala-419, and Arg-436 each bind acetyl-CoA; that span reads NY.

It in the N-terminal section; belongs to the N-acetylglucosamine-1-phosphate uridyltransferase family. The protein in the C-terminal section; belongs to the transferase hexapeptide repeat family. As to quaternary structure, homotrimer. Mg(2+) serves as cofactor.

It localises to the cytoplasm. It catalyses the reaction alpha-D-glucosamine 1-phosphate + acetyl-CoA = N-acetyl-alpha-D-glucosamine 1-phosphate + CoA + H(+). The enzyme catalyses N-acetyl-alpha-D-glucosamine 1-phosphate + UTP + H(+) = UDP-N-acetyl-alpha-D-glucosamine + diphosphate. It functions in the pathway nucleotide-sugar biosynthesis; UDP-N-acetyl-alpha-D-glucosamine biosynthesis; N-acetyl-alpha-D-glucosamine 1-phosphate from alpha-D-glucosamine 6-phosphate (route II): step 2/2. It participates in nucleotide-sugar biosynthesis; UDP-N-acetyl-alpha-D-glucosamine biosynthesis; UDP-N-acetyl-alpha-D-glucosamine from N-acetyl-alpha-D-glucosamine 1-phosphate: step 1/1. Its pathway is bacterial outer membrane biogenesis; LPS lipid A biosynthesis. Catalyzes the last two sequential reactions in the de novo biosynthetic pathway for UDP-N-acetylglucosamine (UDP-GlcNAc). The C-terminal domain catalyzes the transfer of acetyl group from acetyl coenzyme A to glucosamine-1-phosphate (GlcN-1-P) to produce N-acetylglucosamine-1-phosphate (GlcNAc-1-P), which is converted into UDP-GlcNAc by the transfer of uridine 5-monophosphate (from uridine 5-triphosphate), a reaction catalyzed by the N-terminal domain. The protein is Bifunctional protein GlmU of Francisella philomiragia subsp. philomiragia (strain ATCC 25017 / CCUG 19701 / FSC 153 / O#319-036).